Here is a 495-residue protein sequence, read N- to C-terminus: Monoamine oxidase N (495 aa).

The segment covering Met1 to Val19 has biased composition (polar residues). A disordered region spans residues Met1–Gly23. Residues Ala493 to Leu495 carry the Microbody targeting signal motif.

The protein belongs to the flavin monoamine oxidase family. FAD serves as cofactor.

The protein resides in the peroxisome. It carries out the reaction a secondary aliphatic amine + O2 + H2O = a primary amine + an aldehyde + H2O2. This chain is Monoamine oxidase N (maoN), found in Aspergillus niger.